The sequence spans 333 residues: Glycerol-3-phosphate dehydrogenase [NAD(P)+] (333 aa).

NADPH contacts are provided by S10, W11, H31, R32, and K105. Positions 105, 136, and 138 each coordinate sn-glycerol 3-phosphate. A140 contributes to the NADPH binding site. K191, D244, S254, R255, and N256 together coordinate sn-glycerol 3-phosphate. Catalysis depends on K191, which acts as the Proton acceptor. R255 provides a ligand contact to NADPH. I279 and E281 together coordinate NADPH.

It belongs to the NAD-dependent glycerol-3-phosphate dehydrogenase family.

Its subcellular location is the cytoplasm. The catalysed reaction is sn-glycerol 3-phosphate + NAD(+) = dihydroxyacetone phosphate + NADH + H(+). It catalyses the reaction sn-glycerol 3-phosphate + NADP(+) = dihydroxyacetone phosphate + NADPH + H(+). Its pathway is membrane lipid metabolism; glycerophospholipid metabolism. Functionally, catalyzes the reduction of the glycolytic intermediate dihydroxyacetone phosphate (DHAP) to sn-glycerol 3-phosphate (G3P), the key precursor for phospholipid synthesis. The sequence is that of Glycerol-3-phosphate dehydrogenase [NAD(P)+] from Chlorobium chlorochromatii (strain CaD3).